A 1361-amino-acid chain; its full sequence is Rho guanine nucleotide exchange factor 18 (1361 aa).

Disordered regions lie at residues 33–88 (LQDL…SCSE), 131–156 (SGGGTPAESPGKECDSPKKRGRSRSV), and 244–292 (DGAG…ARER). Residues 50–61 (PDSRPTGEEPGR) show a composition bias toward basic and acidic residues. Residues 64–73 (LFSSLAGSQD) show a composition bias toward polar residues. A compositionally biased stretch (basic and acidic residues) spans 74–88 (LSRRRSWERSRSCSE). 2 stretches are compositionally biased toward basic and acidic residues: residues 245–256 (GAGKNEKSDKST) and 271–292 (RQKEKGKSPAHLKDKGQDARER). Residues 310–334 (SSCPLCGKPFLSSASLKEHPRGTLL) form a C2H2-type; degenerate zinc finger. Residues 348–368 (TVSQKGGPQPTPSPAGPGTQL) form a disordered region. The 198-residue stretch at 447 to 644 (KRQDVLYELM…KDIISQVDAK (198 aa)) folds into the DH domain. Residues 684–786 (QLHLEGMLCW…WMAHIQRAVE (103 aa)) enclose the PH domain. Disordered stretches follow at residues 893-980 (ANGQ…DPRL), 1143-1211 (LKKQ…RLAK), 1229-1264 (AAVQQQIPTKLAASTKGGKDKGGKSRGSQRWESSAS), and 1277-1361 (MGKD…VIFF). Threonine 912 is subject to Phosphothreonine. Phosphoserine is present on serine 921. The stretch at 1038 to 1148 (LEQERQRNFE…LLRRLKKQNT (111 aa)) forms a coiled coil. Over residues 1191 to 1211 (YAERPEVARRDSAPTENRLAK) the composition is skewed to basic and acidic residues. A compositionally biased stretch (polar residues) spans 1254-1264 (RGSQRWESSAS). Phosphoserine occurs at positions 1289 and 1291. Composition is skewed to pro residues over residues 1300–1317 (PAPPPDPGFPAPSPPPAD) and 1334–1344 (PGPPAPSPLPA). The segment covering 1349–1361 (AKEDASKEDVIFF) has biased composition (basic and acidic residues).

In terms of assembly, interacts with SEPT9; the interaction may inhibit GEF activity. Interacts with Gbetagamma subunits GNB1 and GNG2. Interacts with EPB41L4B. Interacts with PATJ (via C-terminus). In terms of tissue distribution, expressed in all tissues tested with highest expression in kidney and pancreas. Weakly or not expressed in liver, skeletal muscle and testis. Isoform 1: Expressed in eosinophils. Isoform 2: Expressed in eosinophils. Isoform 3: Expressed in eosinophils. Isoform 4: Not detected in eosinophils.

Its subcellular location is the cytoplasm. The protein localises to the cytoskeleton. It is found in the cell membrane. It localises to the apical cell membrane. Acts as a guanine nucleotide exchange factor (GEF) for RhoA GTPases. Its activation induces formation of actin stress fibers. Also acts as a GEF for RAC1, inducing production of reactive oxygen species (ROS). Does not act as a GEF for CDC42. The G protein beta-gamma (Gbetagamma) subunits of heterotrimeric G proteins act as activators, explaining the integrated effects of LPA and other G-protein coupled receptor agonists on actin stress fiber formation, cell shape change and ROS production. Required for EPB41L4B-mediated regulation of the circumferential actomyosin belt in epithelial cells. This is Rho guanine nucleotide exchange factor 18 (ARHGEF18) from Homo sapiens (Human).